The following is a 393-amino-acid chain: UDP-N-acetylglucosamine--N-acetylmuramyl-(pentapeptide) pyrophosphoryl-undecaprenol N-acetylglucosamine transferase (393 aa).

Residues 15–17, Asn129, Arg171, Ser211, and Gln322 contribute to the UDP-N-acetyl-alpha-D-glucosamine site; that span reads TAG.

It belongs to the glycosyltransferase 28 family. MurG subfamily.

It is found in the cell membrane. It catalyses the reaction di-trans,octa-cis-undecaprenyl diphospho-N-acetyl-alpha-D-muramoyl-L-alanyl-D-glutamyl-meso-2,6-diaminopimeloyl-D-alanyl-D-alanine + UDP-N-acetyl-alpha-D-glucosamine = di-trans,octa-cis-undecaprenyl diphospho-[N-acetyl-alpha-D-glucosaminyl-(1-&gt;4)]-N-acetyl-alpha-D-muramoyl-L-alanyl-D-glutamyl-meso-2,6-diaminopimeloyl-D-alanyl-D-alanine + UDP + H(+). It participates in cell wall biogenesis; peptidoglycan biosynthesis. In terms of biological role, cell wall formation. Catalyzes the transfer of a GlcNAc subunit on undecaprenyl-pyrophosphoryl-MurNAc-pentapeptide (lipid intermediate I) to form undecaprenyl-pyrophosphoryl-MurNAc-(pentapeptide)GlcNAc (lipid intermediate II). In Bifidobacterium longum (strain DJO10A), this protein is UDP-N-acetylglucosamine--N-acetylmuramyl-(pentapeptide) pyrophosphoryl-undecaprenol N-acetylglucosamine transferase.